A 173-amino-acid polypeptide reads, in one-letter code: Small ribosomal subunit protein uS5 (173 aa).

Positions 17 to 80 (WQERVIQIRR…ADGKKQLIEV (64 aa)) constitute an S5 DRBM domain.

It belongs to the universal ribosomal protein uS5 family. In terms of assembly, part of the 30S ribosomal subunit. Contacts proteins S4 and S8.

Its function is as follows. With S4 and S12 plays an important role in translational accuracy. Located at the back of the 30S subunit body where it stabilizes the conformation of the head with respect to the body. This chain is Small ribosomal subunit protein uS5, found in Microcystis aeruginosa (strain NIES-843 / IAM M-2473).